The primary structure comprises 189 residues: Proline-rich protein 29 (189 aa).

Residues 152–189 (SREREVRAVPPPPPPSATGTVGADVPPASDYYDAESLL) form a disordered region.

This is Proline-rich protein 29 (PRR29) from Homo sapiens (Human).